The sequence spans 160 residues: Nucleotide-binding protein BAV0791 (160 aa).

This sequence belongs to the YajQ family.

In terms of biological role, nucleotide-binding protein. The polypeptide is Nucleotide-binding protein BAV0791 (Bordetella avium (strain 197N)).